The chain runs to 504 residues: MIVLTGHSLTIAEARRVIYDREPVAAALESMEAVRKSRAAVEQAIASGRTIYGVNTGFGKLADVRIDGSDLEQLQINLLRSHACAVGEPFAEEVVRAMLLLRANALLKGYSGIRPVVIERLLAFLNSGIHPIVPQQGSLGASGDLAPLAHLALALVGEGEVMYQGQRMPAIQALSQAGIPPLSLKEKEGLALINGTQAMTAMGVIAYLEAEQLAYDSEWIAALTIEALYGVIDAFDARIHEARGFLEQAEVAERLRRYLDGSQLITRQGERRVQDAYSIRCIPQVHGASLRALRYVKETLEIEMNAATDNPLIFADGAVLSGGNFHGQPVAIAMDLLKIAVAELANMSERRIERLVNPQLSEGLPPFLSPEPGLQSGAMIMQYVAASLVSENKTLAHPASVDSIPSSANQEDHVSMGTTAARHAYLIVQNVRKVLAIELICALQAVEERGIDQLAPSTSQLYHQARRIVPSIVADRVFSRDIEAVDAWLKQQAIRDRLAGGASV.

A cross-link (5-imidazolinone (Ala-Gly)) is located at residues 141–143; that stretch reads ASG. Ser-142 bears the 2,3-didehydroalanine (Ser) mark.

It belongs to the PAL/histidase family. In terms of processing, contains an active site 4-methylidene-imidazol-5-one (MIO), which is formed autocatalytically by cyclization and dehydration of residues Ala-Ser-Gly.

It is found in the cytoplasm. It catalyses the reaction L-histidine = trans-urocanate + NH4(+). It functions in the pathway amino-acid degradation; L-histidine degradation into L-glutamate; N-formimidoyl-L-glutamate from L-histidine: step 1/3. The polypeptide is Histidine ammonia-lyase (Geobacillus thermodenitrificans (strain NG80-2)).